The sequence spans 351 residues: N-acetyl-gamma-glutamyl-phosphate reductase (351 aa).

Cysteine 154 is a catalytic residue.

It belongs to the NAGSA dehydrogenase family. Type 1 subfamily.

It is found in the cytoplasm. It catalyses the reaction N-acetyl-L-glutamate 5-semialdehyde + phosphate + NADP(+) = N-acetyl-L-glutamyl 5-phosphate + NADPH + H(+). It functions in the pathway amino-acid biosynthesis; L-arginine biosynthesis; N(2)-acetyl-L-ornithine from L-glutamate: step 3/4. Its function is as follows. Catalyzes the NADPH-dependent reduction of N-acetyl-5-glutamyl phosphate to yield N-acetyl-L-glutamate 5-semialdehyde. The polypeptide is N-acetyl-gamma-glutamyl-phosphate reductase (Prochlorococcus marinus (strain AS9601)).